We begin with the raw amino-acid sequence, 257 residues long: Glucanase inhibitor protein 1 (257 aa).

The signal sequence occupies residues 1–28 (MKVFPALTSALVALGTAGVEAEHVQRSL). The region spanning 29-256 (VMGGGTVPVG…GLEWINSVIK (228 aa)) is the Peptidase S1 domain. Cys56 and Cys72 are oxidised to a cystine. 2 N-linked (GlcNAc...) asparagine glycosylation sites follow: Asn107 and Asn180. 2 disulfides stabilise this stretch: Cys181/Cys191 and Cys201/Cys232. A glycan (N-linked (GlcNAc...) asparagine) is linked at Asn213.

The protein belongs to the peptidase S1 family. As to quaternary structure, interacts with host endoglucanases EGaseA.

It is found in the secreted. In terms of biological role, secreted effector that suppresses host plant glucan elicitor-mediated defense responses. Targets host endoglucanase EGaseA and inhibits the EGaseA-mediated release of elicitor-active glucan oligosaccharides from P.sojae cell walls. This is Glucanase inhibitor protein 1 from Phytophthora sojae (Soybean stem and root rot agent).